The primary structure comprises 575 residues: Probable lysosomal cobalamin transporter (575 aa).

5 helical membrane-spanning segments follow: residues 8 to 28, 46 to 66, 95 to 115, 144 to 164, and 188 to 208; these read LIWVVYAVVVVVLFAVASVFI, IVAITSLLATILLLPVDVALV, LVYYILYSLDILLCLLVVPFV, YTLSFIAILIILFLVGVFVPI, and ALTFALGLLITIGMYVYALHT. Asn233 carries N-linked (GlcNAc...) asparagine glycosylation. Helical transmembrane passes span 314 to 334, 376 to 396, 420 to 440, and 504 to 524; these read LVGLILLLLVLLIWVSMILTA, AIFTMLVLLLFFGTVVGIATV, VMTAILMLSILALNYSISMIV, and FGAIFFWSQFAFIGVYLLALI. Over residues 537–549 the composition is skewed to acidic residues; that stretch reads QLDEDAEEAEEEA. The tract at residues 537-556 is disordered; it reads QLDEDAEEAEEEALLSGSRR.

This sequence belongs to the LIMR family. LMBRD1 subfamily.

The protein resides in the lysosome membrane. Functionally, probable lysosomal cobalamin transporter. Required to export cobalamin from lysosomes allowing its conversion to cofactors. The protein is Probable lysosomal cobalamin transporter of Emericella nidulans (strain FGSC A4 / ATCC 38163 / CBS 112.46 / NRRL 194 / M139) (Aspergillus nidulans).